The chain runs to 442 residues: MDAWPRCLERLEAEFPPEDVHTWLKPLQAEDRGDSIVLYAPNAFIVDQVRERYLPRIRELLAYFVGNGDVALAVGSRPRAPEPAPAPVAVPSAPQAAPIVPFAGNLDSHYTFANFVEGRSNQLGLAAAIQAAQKPGDRAHNPLLLYGSTGLGKTHLMFAAGNALRQANPAAKVMYLRSEQFFSAMIRALQDKAMDQFKRQFQQIDALLIDDIQFFAGKDRTQEEFFHTFNALFDGRQQIILTCDRYPREVEGLEPRLKSRLAWGLSVAIDPPDFETRAAIVLAKARERGAEIPDDVAFLIAKKMRSNVRDLEGALNTLVARANFTGRSITVEFAQETLRDLLRAQQQAIGIPNIQKTVADYYGLQMKDLLSKRRTRSLARPRQVAMALAKELTEHSLPEIGDAFAGRDHTTVLHACRQIRTLMEADGKLREDWEKLIRKLSE.

A domain I, interacts with DnaA modulators region spans residues 1–68 (MDAWPRCLER…ELLAYFVGNG (68 aa)). The interval 68 to 104 (GDVALAVGSRPRAPEPAPAPVAVPSAPQAAPIVPFAG) is domain II. The interval 105–322 (NLDSHYTFAN…GALNTLVARA (218 aa)) is domain III, AAA+ region. Gly150, Gly152, Lys153, and Thr154 together coordinate ATP. Positions 323–442 (NFTGRSITVE…WEKLIRKLSE (120 aa)) are domain IV, binds dsDNA.

It belongs to the DnaA family. Oligomerizes as a right-handed, spiral filament on DNA at oriC.

Its subcellular location is the cytoplasm. Plays an essential role in the initiation and regulation of chromosomal replication. ATP-DnaA binds to the origin of replication (oriC) to initiate formation of the DNA replication initiation complex once per cell cycle. Binds the DnaA box (a 9 base pair repeat at the origin) and separates the double-stranded (ds)DNA. Forms a right-handed helical filament on oriC DNA; dsDNA binds to the exterior of the filament while single-stranded (ss)DNA is stabiized in the filament's interior. The ATP-DnaA-oriC complex binds and stabilizes one strand of the AT-rich DNA unwinding element (DUE), permitting loading of DNA polymerase. After initiation quickly degrades to an ADP-DnaA complex that is not apt for DNA replication. Binds acidic phospholipids. The polypeptide is Chromosomal replication initiator protein DnaA (Xanthomonas axonopodis pv. citri (strain 306)).